Reading from the N-terminus, the 535-residue chain is CTP synthase (535 aa).

Residues 1-268 (MKTKYIFVTG…DSLVCKKLEL (268 aa)) form an amidoligase domain region. Residue S14 participates in CTP binding. S14 is a UTP binding site. 15 to 20 (SLGKGI) lines the ATP pocket. Y55 lines the L-glutamine pocket. D72 contacts ATP. The Mg(2+) site is built by D72 and E142. CTP-binding positions include 149 to 151 (DIE), 189 to 194 (KTKPTQ), and K225. Residues 189 to 194 (KTKPTQ) and K225 each bind UTP. Residues 293–535 (TIGLVGKYVE…IKVACTVKEK (243 aa)) form the Glutamine amidotransferase type-1 domain. Residue G355 coordinates L-glutamine. The active-site Nucleophile; for glutamine hydrolysis is the C382. Residues 383 to 386 (LGMQ), E406, and R463 each bind L-glutamine. Residues H508 and E510 contribute to the active site.

The protein belongs to the CTP synthase family. As to quaternary structure, homotetramer.

The enzyme catalyses UTP + L-glutamine + ATP + H2O = CTP + L-glutamate + ADP + phosphate + 2 H(+). It carries out the reaction L-glutamine + H2O = L-glutamate + NH4(+). The catalysed reaction is UTP + NH4(+) + ATP = CTP + ADP + phosphate + 2 H(+). It participates in pyrimidine metabolism; CTP biosynthesis via de novo pathway; CTP from UDP: step 2/2. Allosterically activated by GTP, when glutamine is the substrate; GTP has no effect on the reaction when ammonia is the substrate. The allosteric effector GTP functions by stabilizing the protein conformation that binds the tetrahedral intermediate(s) formed during glutamine hydrolysis. Inhibited by the product CTP, via allosteric rather than competitive inhibition. Catalyzes the ATP-dependent amination of UTP to CTP with either L-glutamine or ammonia as the source of nitrogen. Regulates intracellular CTP levels through interactions with the four ribonucleotide triphosphates. The chain is CTP synthase from Clostridium acetobutylicum (strain ATCC 824 / DSM 792 / JCM 1419 / IAM 19013 / LMG 5710 / NBRC 13948 / NRRL B-527 / VKM B-1787 / 2291 / W).